Reading from the N-terminus, the 330-residue chain is DNA-directed RNA polymerase subunit alpha (330 aa).

The segment at 1 to 236 (MQGSVTEFLK…EQLDAFVDLR (236 aa)) is alpha N-terminal domain (alpha-NTD). Residues 250–330 (FDPILLRPVD…NWPPASIAED (81 aa)) are alpha C-terminal domain (alpha-CTD).

The protein belongs to the RNA polymerase alpha chain family. In terms of assembly, homodimer. The RNAP catalytic core consists of 2 alpha, 1 beta, 1 beta' and 1 omega subunit. When a sigma factor is associated with the core the holoenzyme is formed, which can initiate transcription.

It carries out the reaction RNA(n) + a ribonucleoside 5'-triphosphate = RNA(n+1) + diphosphate. In terms of biological role, DNA-dependent RNA polymerase catalyzes the transcription of DNA into RNA using the four ribonucleoside triphosphates as substrates. The sequence is that of DNA-directed RNA polymerase subunit alpha from Vibrio vulnificus (strain CMCP6).